We begin with the raw amino-acid sequence, 835 residues long: Prickle-like protein 1-A (835 aa).

Residues 14 to 122 enclose the PET domain; it reads FGCQRSSTSD…NIKMLSRAVM (109 aa). LIM zinc-binding domains are found at residues 124–188, 189–249, and 250–313; these read ATCE…ELLK, PRCS…HYAE, and YCES…EDVH. Disordered regions lie at residues 312–346, 426–455, 603–706, and 769–835; these read VHAS…ADQC, LFQQ…QRNN, CQEK…RKRS, and CSSS…CIIS. Basic and acidic residues-rich tracts occupy residues 432-453, 603-614, and 646-655; these read EDNR…DLQR, CQEKPPPEEKPM, and EIRRPPMSER. Basic residues-rich tracts occupy residues 669 to 683 and 819 to 835; these read RPHH…KSRK and SKSK…CIIS. C832 carries the post-translational modification Cysteine methyl ester. The S-farnesyl cysteine moiety is linked to residue C832. Residues 833–835 constitute a propeptide, removed in mature form; the sequence is IIS.

It belongs to the prickle / espinas / testin family. In terms of assembly, interacts with dvl2/dsh and mapk8/jnk1. In terms of tissue distribution, expressed in the dorsal marginal zone of early gastrulae (stage 10). As gastrulation proceeds, expression expands to include the lateral and ventral marginal zones, excluding the few rows of cells above the blastopore lip. Expression moves dorsally with gastrulation cell movements, and by the end of gastrulation expression is seen in dorsal mesoderm and posterior but not anterior neural ectoderm. Expression becomes down-regulated in mesoderm but remains strong in posterior ectoderm through the neurula stages. During tailbud stages, expressed in the pronephric duct, tailbud, tailtip and forming somites. In the most posterior regions, expressed in notochord and in the floorplate of the neural tube with weak expression in the roofplate. At stage 30, expressed in a complex pattern in the head including strong expression in the lens and otic vesicle.

The protein localises to the cell membrane. Its function is as follows. Acts in a planar cell polarity (PCP) complex; polarization along the apical/basal axis of epithelial cells. Regulates the polarized assembly of fibronectrin on the surface of the mesoderm during gastrulation. Essential for gastrulation cell movements, cooperating with dvl2/dsh to activate jnk. Acts together with tes to control axial elongation. This is Prickle-like protein 1-A (prickle1-a) from Xenopus laevis (African clawed frog).